The chain runs to 262 residues: GTP cyclohydrolase FolE2 (262 aa).

Belongs to the GTP cyclohydrolase IV family.

The catalysed reaction is GTP + H2O = 7,8-dihydroneopterin 3'-triphosphate + formate + H(+). It functions in the pathway cofactor biosynthesis; 7,8-dihydroneopterin triphosphate biosynthesis; 7,8-dihydroneopterin triphosphate from GTP: step 1/1. Its function is as follows. Converts GTP to 7,8-dihydroneopterin triphosphate. This chain is GTP cyclohydrolase FolE2, found in Dichelobacter nodosus (strain VCS1703A).